We begin with the raw amino-acid sequence, 203 residues long: RNA annealing protein YRA2 (203 aa).

Residue Met1 is modified to N-acetylmethionine. 2 disordered regions span residues 1 to 60 (MDKA…REEP) and 137 to 203 (QPQR…YMKG). The span at 11 to 20 (NSHTDSSSNH) shows a compositional bias: polar residues. A compositionally biased stretch (basic and acidic residues) spans 47–60 (SRSKDRLYREREEP). Positions 64 to 138 (KRIRISKIPL…AKIEVEIYQP (75 aa)) constitute an RRM domain. Composition is skewed to basic residues over residues 139–153 (QRKH…RRKQ) and 161–180 (GRPG…KNKG).

Belongs to the YRA1 family. Associates with mRNPs. Interacts with YRA1.

Its subcellular location is the nucleus. Functionally, involved in export of poly(A) mRNAs from the nucleus. Recruited to the coding sequences as well as poly-A sites of active genes. This Saccharomyces cerevisiae (strain JAY291) (Baker's yeast) protein is RNA annealing protein YRA2 (YRA2).